The chain runs to 243 residues: Ubiquinone/menaquinone biosynthesis C-methyltransferase UbiE (243 aa).

S-adenosyl-L-methionine-binding positions include Thr69, Asp90, and 116–117 (DA).

This sequence belongs to the class I-like SAM-binding methyltransferase superfamily. MenG/UbiE family.

The catalysed reaction is a 2-demethylmenaquinol + S-adenosyl-L-methionine = a menaquinol + S-adenosyl-L-homocysteine + H(+). The enzyme catalyses a 2-methoxy-6-(all-trans-polyprenyl)benzene-1,4-diol + S-adenosyl-L-methionine = a 5-methoxy-2-methyl-3-(all-trans-polyprenyl)benzene-1,4-diol + S-adenosyl-L-homocysteine + H(+). The protein operates within quinol/quinone metabolism; menaquinone biosynthesis; menaquinol from 1,4-dihydroxy-2-naphthoate: step 2/2. It functions in the pathway cofactor biosynthesis; ubiquinone biosynthesis. Methyltransferase required for the conversion of demethylmenaquinol (DMKH2) to menaquinol (MKH2) and the conversion of 2-polyprenyl-6-methoxy-1,4-benzoquinol (DDMQH2) to 2-polyprenyl-3-methyl-6-methoxy-1,4-benzoquinol (DMQH2). The chain is Ubiquinone/menaquinone biosynthesis C-methyltransferase UbiE from Burkholderia ambifaria (strain MC40-6).